Here is a 202-residue protein sequence, read N- to C-terminus: Transmembrane 4 L6 family member 1 (202 aa).

Residues 1–9 (MCSSKCTRY) are Cytoplasmic-facing. The helical transmembrane segment at 10 to 30 (IGHSLVVFAVLCIVANILLYF) threads the bilayer. Residues 31–49 (PNGETKYAYEDHLSRFVWF) lie on the Extracellular side of the membrane. Residues 50-70 (FAGIVGGGLLILLPAFVFLGL) form a helical membrane-spanning segment. Over 71–93 (EGEDCCGCWSCENYGKRCTMLSS) the chain is Cytoplasmic. A helical transmembrane segment spans residues 94 to 114 (IMAALIGIAGSGYCVIVAALG). The Extracellular segment spans residues 115-161 (LAEGPKCGDSHGMWNYTFANTDGQYLLDPTTWSKCHEPNNIVEWNVT). Residues asparagine 129 and asparagine 159 are each glycosylated (N-linked (GlcNAc...) asparagine). Residues 162–182 (LFSILLALGGLEFILCLIQVI) form a helical membrane-spanning segment. The Cytoplasmic segment spans residues 183–202 (NGVLEGMCSYCCSHQQQYDC).

It belongs to the L6 tetraspanin family. Present in high molecular weight complexes in tumor cells. Interacts with SDCBP2.

The protein localises to the membrane. The protein is Transmembrane 4 L6 family member 1 (TM4SF1) of Mesocricetus auratus (Golden hamster).